The sequence spans 116 residues: MSEPQNGRGALFAGGLAAILASACCLGPLVLIALGFSGAWIGNLTVLEPYRPIFIGAALVALFFAWRRIVRPTAACKPGEVCAIPQVRTTYKLIFWFVAVLVLVALGFPYVMPFFY.

Transmembrane regions (helical) follow at residues 16-36 and 46-66; these read LAAI…ALGF and VLEP…FFAW. Hg(2+)-binding residues include C24 and C25. Hg(2+)-binding residues include C76 and C82. Residues 94 to 114 traverse the membrane as a helical segment; sequence IFWFVAVLVLVALGFPYVMPF.

The protein belongs to the MerT family.

The protein resides in the cell inner membrane. In terms of biological role, involved in mercury resistance. Probably transfers a mercuric ion from the periplasmic Hg(2+)-binding protein MerP to the cytoplasmic mercuric reductase MerA. This is Mercuric transport protein MerT from Acinetobacter calcoaceticus.